The primary structure comprises 853 residues: WEB family protein At5g16730, chloroplastic (853 aa).

Low complexity-rich tracts occupy residues 1–27 (MASK…PATP) and 36–49 (KSET…STTT). The N-terminal 84 residues, 1–84 (MASKTKTSLS…PTPPEKSQAR (84 aa)), are a transit peptide targeting the chloroplast. Disordered regions lie at residues 1–106 (MASK…IKED), 386–465 (KEDL…SKKA), 666–765 (LAKK…SVEV), and 778–820 (KEAF…ALTA). Over residues 92–101 (ESPQTTTRLS) the composition is skewed to polar residues. Residues 94 to 670 (PQTTTRLSQI…LEEAILAKKQ (577 aa)) adopt a coiled-coil conformation. 3 stretches are compositionally biased toward basic and acidic residues: residues 402–465 (EVSK…SKKA), 698–718 (NGHR…HEPP), and 732–753 (MEEK…KKDE). Residues 754 to 763 (SQDDDKDDSV) show a composition bias toward acidic residues. Basic and acidic residues predominate over residues 778–788 (KEAFPDKKSEL). Ser790 is modified (phosphoserine). Residues 797-807 (SSKIDESDKTS) are compositionally biased toward basic and acidic residues.

This sequence belongs to the WEB family.

It localises to the plastid. It is found in the chloroplast. This chain is WEB family protein At5g16730, chloroplastic, found in Arabidopsis thaliana (Mouse-ear cress).